Here is a 112-residue protein sequence, read N- to C-terminus: DNA-binding protein PF1087 (112 aa).

Belongs to the PDCD5 family.

The chain is DNA-binding protein PF1087 from Pyrococcus furiosus (strain ATCC 43587 / DSM 3638 / JCM 8422 / Vc1).